The following is a 243-amino-acid chain: Tubulin-folding cofactor B (243 aa).

The CAP-Gly domain maps to 181–223 (RAESLGPGYWVGIQYDEPLGKHDGMVKGTRFFECPRLQGGMVR).

Belongs to the TBCB family. As to quaternary structure, supercomplex made of cofactors A to E. Cofactors A and D function by capturing and stabilizing tubulin in a quasi-native conformation. Cofactor E binds to the cofactor D-tubulin complex; interaction with cofactor C then causes the release of tubulin polypeptides that are committed to the native state. Interacts with TUBA6. In terms of tissue distribution, expressed in roots, stems, leaves, flowers and siliques.

The protein resides in the cytoplasm. Involved in control of cell division. Regulates probably the availability of alpha-tubulin for dimerization of alpha-/beta-tubulin, which is required for proper microtubule biogenesis. Decreased expression of TFCB results in enlarged mesophyll cells and leaf epidermal cells with bulged nuclei, increased ploidy and increased numbers of spindles and phragmoplasts. In Arabidopsis thaliana (Mouse-ear cress), this protein is Tubulin-folding cofactor B (TFCB).